Reading from the N-terminus, the 372-residue chain is Protein RecA (372 aa).

G66 to T73 is an ATP binding site. Residues G328–T359 are disordered. Positions A345–T359 are enriched in low complexity.

This sequence belongs to the RecA family.

It is found in the cytoplasm. Can catalyze the hydrolysis of ATP in the presence of single-stranded DNA, the ATP-dependent uptake of single-stranded DNA by duplex DNA, and the ATP-dependent hybridization of homologous single-stranded DNAs. It interacts with LexA causing its activation and leading to its autocatalytic cleavage. In Streptomyces ambofaciens, this protein is Protein RecA.